The following is a 117-amino-acid chain: Anti-sigma F factor antagonist (117 aa).

Residues 2 to 115 (HFQLEMVTRE…QAIDRVRGIV (114 aa)) enclose the STAS domain. At S58 the chain carries Phosphoserine.

The protein belongs to the anti-sigma-factor antagonist family. Phosphorylated by SpoIIAB on a serine residue.

Its function is as follows. In the phosphorylated form it could act as an anti-anti-sigma factor that counteracts SpoIIAB and thus releases sigma f from inhibition. This is Anti-sigma F factor antagonist (spoIIAA) from Lysinibacillus sphaericus (Bacillus sphaericus).